Here is a 473-residue protein sequence, read N- to C-terminus: Bifunctional protein HldE (473 aa).

Residues 1–317 (MTHGLPHFTS…LQQALHPRAI (317 aa)) form a ribokinase region. Residue 195–198 (NLAE) participates in ATP binding. Residue Asp-264 is part of the active site. The tract at residues 343 to 473 (MTNGCFDILH…SQIIDIIRKN (131 aa)) is cytidylyltransferase.

The protein in the N-terminal section; belongs to the carbohydrate kinase PfkB family. It in the C-terminal section; belongs to the cytidylyltransferase family. Homodimer.

It carries out the reaction D-glycero-beta-D-manno-heptose 7-phosphate + ATP = D-glycero-beta-D-manno-heptose 1,7-bisphosphate + ADP + H(+). The catalysed reaction is D-glycero-beta-D-manno-heptose 1-phosphate + ATP + H(+) = ADP-D-glycero-beta-D-manno-heptose + diphosphate. It participates in nucleotide-sugar biosynthesis; ADP-L-glycero-beta-D-manno-heptose biosynthesis; ADP-L-glycero-beta-D-manno-heptose from D-glycero-beta-D-manno-heptose 7-phosphate: step 1/4. Its pathway is nucleotide-sugar biosynthesis; ADP-L-glycero-beta-D-manno-heptose biosynthesis; ADP-L-glycero-beta-D-manno-heptose from D-glycero-beta-D-manno-heptose 7-phosphate: step 3/4. Catalyzes the phosphorylation of D-glycero-D-manno-heptose 7-phosphate at the C-1 position to selectively form D-glycero-beta-D-manno-heptose-1,7-bisphosphate. In terms of biological role, catalyzes the ADP transfer from ATP to D-glycero-beta-D-manno-heptose 1-phosphate, yielding ADP-D-glycero-beta-D-manno-heptose. This is Bifunctional protein HldE from Nitrosococcus oceani (strain ATCC 19707 / BCRC 17464 / JCM 30415 / NCIMB 11848 / C-107).